A 45-amino-acid chain; its full sequence is uncharacterized protein (45 aa).

The chain crosses the membrane as a helical span at residues 5–25 (IFFIFALSGILAACTVGGGVS).

It localises to the membrane. This is an uncharacterized protein from Haemophilus influenzae (strain ATCC 51907 / DSM 11121 / KW20 / Rd).